The sequence spans 839 residues: Transcription regulator protein BACH2 (839 aa).

The BTB domain occupies 37–103 (CDVTLIVERK…AYTAKLLLSR (67 aa)). Disordered regions lie at residues 150–170 (QRPQEDHGNSAGEEEEEEETM) and 247–331 (HGTS…LDRS). Acidic residues predominate over residues 161-170 (GEEEEEEETM). Residues 247 to 263 (HGTSGFASTFSEDSPGN) are compositionally biased toward polar residues. The span at 297–312 (TDIKDRPGDVEMDRKQ) shows a compositional bias: basic and acidic residues. The residue at position 314 (Ser314) is a Phosphoserine. A compositionally biased stretch (low complexity) spans 321–331 (TPTGAACLDRS). Residues Lys381 and Lys420 each participate in a glycyl lysine isopeptide (Lys-Gly) (interchain with G-Cter in SUMO2) cross-link. Ser520 bears the Phosphoserine mark. The segment at 582-609 (QSYGTNSSDESGSFSEADSESCPVQDRG) is disordered. Residues 583 to 597 (SYGTNSSDESGSFSE) show a composition bias toward polar residues. A bZIP domain is found at 645–708 (FIHDIRRRSK…GELLDNFSCL (64 aa)). The tract at residues 650-666 (RRRSKNRIAAQRCRKRK) is basic motif. The leucine-zipper stretch occupies residues 670–677 (IQNLECEI). The tract at residues 778–813 (PWVPSNTSENCTSGRRLEGSDPGTFSERGPPLEARS) is disordered. Over residues 781 to 790 (PSNTSENCTS) the composition is skewed to polar residues. The Nuclear export signal motif lies at 819–839 (DFCQEMTEKCTTDEQPRKDYA).

Belongs to the bZIP family. CNC subfamily. Homodimer; disulfide-linked. Heterodimer of BACH2 and Maf-related transcription factors. The reversible disulfide bond may provide a mechanism to regulate the activity in oxidative stress responses. In terms of processing, phosphorylation at Ser-520 downstream of the PI-3K pathway promotes nuclear export. In terms of tissue distribution, detected in brain and spleen.

It is found in the cytoplasm. It localises to the nucleus. In terms of biological role, transcriptional regulator that acts as a repressor or activator. Binds to Maf recognition elements (MARE). Plays an important role in coordinating transcription activation and repression by MAFK. Induces apoptosis in response to oxidative stress through repression of the antiapoptotic factor HMOX1. Positively regulates the nuclear import of actin. Is a key regulator of adaptive immunity, crucial for the maintenance of regulatory T-cell function and B-cell maturation. The sequence is that of Transcription regulator protein BACH2 (Bach2) from Mus musculus (Mouse).